The chain runs to 926 residues: Alpha-L-rhamnosidase (926 aa).

Positions 1-25 (MILHKSVFKSYIYVLTYFVFFSVMS) are cleaved as a signal peptide. Cys-26 carries N-palmitoyl cysteine lipidation. Residue Cys-26 is the site of S-diacylglycerol cysteine attachment. Alpha-L-rhamnose is bound by residues Asp-504, 508–510 (RDE), Asp-517, and Trp-569. Glu-510 functions as the Proton donor in the catalytic mechanism. Glu-779 functions as the Proton acceptor in the catalytic mechanism. His-800 is an alpha-L-rhamnose binding site.

Belongs to the glycosyl hydrolase 78 family.

It is found in the cell membrane. The enzyme catalyses Hydrolysis of terminal non-reducing alpha-L-rhamnose residues in alpha-L-rhamnosides.. Alpha-L-rhamnosidase involved in ulvan degradation. Ulvan is the main polysaccharide component of the Ulvales (green seaweed) cell wall. It is composed of disaccharide building blocks comprising 3-sulfated rhamnose (Rha3S) linked to D-glucuronic acid (GlcA), L-iduronic acid (IduA), or D-xylose (Xyl). Alpha-L-rhamnosidase converts Rha-Xyl-Rha3S, the product of a sulfatase acting on Rha3S-Xyl-Rha3S oligosaccharides, to Rha and Xyl-Rha3S. The enzyme is able to degrade p-nitrophenyl-alpha-L-rhamnopyranoside (PNP-Rha) in vitro. The protein is Alpha-L-rhamnosidase of Formosa agariphila (strain DSM 15362 / KCTC 12365 / LMG 23005 / KMM 3901 / M-2Alg 35-1).